Here is a 450-residue protein sequence, read N- to C-terminus: Probable glycine dehydrogenase (decarboxylating) subunit 1 (450 aa).

This sequence belongs to the GcvP family. N-terminal subunit subfamily. As to quaternary structure, the glycine cleavage system is composed of four proteins: P, T, L and H. In this organism, the P 'protein' is a heterodimer of two subunits.

It carries out the reaction N(6)-[(R)-lipoyl]-L-lysyl-[glycine-cleavage complex H protein] + glycine + H(+) = N(6)-[(R)-S(8)-aminomethyldihydrolipoyl]-L-lysyl-[glycine-cleavage complex H protein] + CO2. In terms of biological role, the glycine cleavage system catalyzes the degradation of glycine. The P protein binds the alpha-amino group of glycine through its pyridoxal phosphate cofactor; CO(2) is released and the remaining methylamine moiety is then transferred to the lipoamide cofactor of the H protein. This chain is Probable glycine dehydrogenase (decarboxylating) subunit 1, found in Staphylococcus haemolyticus (strain JCSC1435).